The primary structure comprises 341 residues: DNA-directed RNA polymerase subunit alpha (341 aa).

The alpha N-terminal domain (alpha-NTD) stretch occupies residues 1 to 233 (MVREEVPVST…DLFIPFLHAE (233 aa)). The segment at 266–341 (IILKRIFIDQ…LKNSNQFESR (76 aa)) is alpha C-terminal domain (alpha-CTD).

It belongs to the RNA polymerase alpha chain family. In terms of assembly, in plastids the minimal PEP RNA polymerase catalytic core is composed of four subunits: alpha, beta, beta', and beta''. When a (nuclear-encoded) sigma factor is associated with the core the holoenzyme is formed, which can initiate transcription.

It localises to the plastid. It is found in the chloroplast. It carries out the reaction RNA(n) + a ribonucleoside 5'-triphosphate = RNA(n+1) + diphosphate. In terms of biological role, DNA-dependent RNA polymerase catalyzes the transcription of DNA into RNA using the four ribonucleoside triphosphates as substrates. This chain is DNA-directed RNA polymerase subunit alpha, found in Nymphaea alba (White water-lily).